Reading from the N-terminus, the 144-residue chain is Putative protein PHLOEM PROTEIN 2-LIKE B4 (144 aa).

This Arabidopsis thaliana (Mouse-ear cress) protein is Putative protein PHLOEM PROTEIN 2-LIKE B4 (PP2B4).